The following is a 189-amino-acid chain: Potassium-transporting ATPase KdpC subunit (189 aa).

Residues 10–30 form a helical membrane-spanning segment; sequence LTLVFCVFFSVCYILVLWIFA.

It belongs to the KdpC family. The system is composed of three essential subunits: KdpA, KdpB and KdpC.

It localises to the cell inner membrane. In terms of biological role, part of the high-affinity ATP-driven potassium transport (or Kdp) system, which catalyzes the hydrolysis of ATP coupled with the electrogenic transport of potassium into the cytoplasm. This subunit acts as a catalytic chaperone that increases the ATP-binding affinity of the ATP-hydrolyzing subunit KdpB by the formation of a transient KdpB/KdpC/ATP ternary complex. This Phocaeicola vulgatus (strain ATCC 8482 / DSM 1447 / JCM 5826 / CCUG 4940 / NBRC 14291 / NCTC 11154) (Bacteroides vulgatus) protein is Potassium-transporting ATPase KdpC subunit.